A 177-amino-acid chain; its full sequence is Adenine phosphoribosyltransferase (177 aa).

The protein belongs to the purine/pyrimidine phosphoribosyltransferase family. In terms of assembly, homodimer.

The protein resides in the cytoplasm. The enzyme catalyses AMP + diphosphate = 5-phospho-alpha-D-ribose 1-diphosphate + adenine. It participates in purine metabolism; AMP biosynthesis via salvage pathway; AMP from adenine: step 1/1. Catalyzes a salvage reaction resulting in the formation of AMP, that is energically less costly than de novo synthesis. This Chlorobium phaeovibrioides (strain DSM 265 / 1930) (Prosthecochloris vibrioformis (strain DSM 265)) protein is Adenine phosphoribosyltransferase.